Reading from the N-terminus, the 192-residue chain is Inosine triphosphate pyrophosphatase (192 aa).

11-16 (TGNKNK) is a binding site for ITP. Residue Glu-41 coordinates Mg(2+). Residues Lys-53, 69–70 (DT), Lys-86, 146–149 (FGWD), Lys-169, and 174–175 (HR) each bind ITP.

The protein belongs to the HAM1 NTPase family. As to quaternary structure, homodimer. The cofactor is Mg(2+). Mn(2+) is required as a cofactor.

Its subcellular location is the cytoplasm. It catalyses the reaction ITP + H2O = IMP + diphosphate + H(+). The catalysed reaction is dITP + H2O = dIMP + diphosphate + H(+). It carries out the reaction XTP + H2O = XMP + diphosphate + H(+). Its function is as follows. Pyrophosphatase that hydrolyzes non-canonical purine nucleotides such as inosine triphosphate (ITP), deoxyinosine triphosphate (dITP) or xanthosine 5'-triphosphate (XTP) to their respective monophosphate derivatives. The enzyme does not distinguish between the deoxy- and ribose forms. Probably excludes non-canonical purines from RNA and DNA precursor pools, thus preventing their incorporation into RNA and DNA and avoiding chromosomal lesions. The chain is Inosine triphosphate pyrophosphatase from Ciona intestinalis (Transparent sea squirt).